We begin with the raw amino-acid sequence, 152 residues long: Arginine repressor (152 aa).

Belongs to the ArgR family.

The protein localises to the cytoplasm. It participates in amino-acid biosynthesis; L-arginine biosynthesis [regulation]. In terms of biological role, regulates arginine biosynthesis genes. The protein is Arginine repressor of Caldicellulosiruptor saccharolyticus (strain ATCC 43494 / DSM 8903 / Tp8T 6331).